The following is a 384-amino-acid chain: Anhydro-N-acetylmuramic acid kinase (384 aa).

9-16 (GTSVDGID) is a binding site for ATP.

The protein belongs to the anhydro-N-acetylmuramic acid kinase family.

The catalysed reaction is 1,6-anhydro-N-acetyl-beta-muramate + ATP + H2O = N-acetyl-D-muramate 6-phosphate + ADP + H(+). It functions in the pathway amino-sugar metabolism; 1,6-anhydro-N-acetylmuramate degradation. It participates in cell wall biogenesis; peptidoglycan recycling. In terms of biological role, catalyzes the specific phosphorylation of 1,6-anhydro-N-acetylmuramic acid (anhMurNAc) with the simultaneous cleavage of the 1,6-anhydro ring, generating MurNAc-6-P. Is required for the utilization of anhMurNAc either imported from the medium or derived from its own cell wall murein, and thus plays a role in cell wall recycling. The chain is Anhydro-N-acetylmuramic acid kinase from Rippkaea orientalis (strain PCC 8801 / RF-1) (Cyanothece sp. (strain PCC 8801)).